Reading from the N-terminus, the 262-residue chain is Urease accessory protein UreD (262 aa).

Belongs to the UreD family. UreD, UreF and UreG form a complex that acts as a GTP-hydrolysis-dependent molecular chaperone, activating the urease apoprotein by helping to assemble the nickel containing metallocenter of UreC. The UreE protein probably delivers the nickel.

It localises to the cytoplasm. Its function is as follows. Required for maturation of urease via the functional incorporation of the urease nickel metallocenter. This is Urease accessory protein UreD from Acetivibrio thermocellus (strain ATCC 27405 / DSM 1237 / JCM 9322 / NBRC 103400 / NCIMB 10682 / NRRL B-4536 / VPI 7372) (Clostridium thermocellum).